A 1343-amino-acid chain; its full sequence is DNA-directed RNA polymerase subunit beta (1343 aa).

The protein belongs to the RNA polymerase beta chain family. As to quaternary structure, the RNAP catalytic core consists of 2 alpha, 1 beta, 1 beta' and 1 omega subunit. When a sigma factor is associated with the core the holoenzyme is formed, which can initiate transcription.

The enzyme catalyses RNA(n) + a ribonucleoside 5'-triphosphate = RNA(n+1) + diphosphate. Functionally, DNA-dependent RNA polymerase catalyzes the transcription of DNA into RNA using the four ribonucleoside triphosphates as substrates. This Shewanella pealeana (strain ATCC 700345 / ANG-SQ1) protein is DNA-directed RNA polymerase subunit beta.